The following is a 420-amino-acid chain: Reticulon-4 receptor-like 2 (420 aa).

A signal peptide spans 1 to 30 (MLPGLRRLLQGPASACLLLTLLALPSVTPS). Intrachain disulfides connect Cys-31/Cys-37 and Cys-35/Cys-46. The 30-residue stretch at 31 to 60 (CPMLCTCYSSPPTVSCQANNFSSVPLSLPP) folds into the LRRNT domain. Asn-50 is a glycosylation site (N-linked (GlcNAc...) asparagine). LRR repeat units follow at residues 61-82 (STQR…TFGP), 83-104 (NLLT…TFRH), 107-129 (ALEE…TFQG), 132-153 (RLQS…IFRG), 156-177 (SLQY…LFAD), 180-201 (NLSH…VFRG), 204-225 (SLDR…AFHG), and 228-249 (RLTI…ALAD). Asn-93 is a glycosylation site (N-linked (GlcNAc...) asparagine). Asn-236 carries N-linked (GlcNAc...) asparagine glycosylation. An LRRCT domain is found at 261-312 (NPWACDCRARPLWAWFQRARVSSSDVTCATPPERQGRDLRALRDSDFQACPP). 2 disulfides stabilise this stretch: Cys-265–Cys-288 and Cys-267–Cys-310. The disordered stretch occupies residues 286-399 (VTCATPPERQ…CQAPADSRGP (114 aa)). Over residues 294 to 306 (RQGRDLRALRDSD) the composition is skewed to basic and acidic residues. The segment at 315 to 327 (PTRPGSRARGNSS) is important for interaction with MAG. Residues 351 to 360 (LPAEDSRGRQ) show a composition bias toward basic and acidic residues. The GPI-anchor amidated glycine moiety is linked to residue Gly-398. The propeptide at 399-420 (PALSAGLRTPLLCLLPLALHHL) is removed in mature form.

The protein belongs to the Nogo receptor family. In terms of assembly, interaction with MAG is controversial, and may be indirect. Interacts with MAG. Does not interact with OMG and RTN4. Post-translationally, undergoes zinc metalloproteinase-mediated ectodomain shedding in neuroblastoma cells; is released both as a full-length ectodomain and an N-terminal fragment containing the leucine-rich repeat (LRR) region of the protein. N-glycosylated. As to expression, detected in brain. Detected in hippocampus neurons (at protein level).

Its subcellular location is the cell membrane. The protein resides in the membrane raft. The protein localises to the cell projection. It localises to the dendrite. It is found in the axon. Its subcellular location is the perikaryon. Functionally, cell surface receptor that plays a functionally redundant role in the inhibition of neurite outgrowth mediated by MAG. Plays a functionally redundant role in postnatal brain development. Contributes to normal axon migration across the brain midline and normal formation of the corpus callosum. Does not seem to play a significant role in regulating axon regeneration in the adult central nervous system. Protects motoneurons against apoptosis; protection against apoptosis is probably mediated by MAG. Like other family members, plays a role in restricting the number dendritic spines and the number of synapses that are formed during brain development. Signaling mediates activation of Rho and downstream reorganization of the actin cytoskeleton. In Mus musculus (Mouse), this protein is Reticulon-4 receptor-like 2.